Reading from the N-terminus, the 848-residue chain is ATP-dependent Clp protease ATP-binding subunit ClpC1 (848 aa).

The Clp R domain occupies F2–G144. Repeat stretches follow at residues F5 to G70 and F80 to G144. One can recognise a UVR domain in the interval D425–Q460. ATP-binding positions include G553–T560 and K617–E626. Positions G811–E848 are disordered. Residues A835 to E848 show a composition bias toward low complexity.

This sequence belongs to the ClpA/ClpB family. ClpC subfamily.

Functionally, ATP-dependent specificity component of the Clp protease. It directs the protease to specific substrates. Can perform chaperone functions in the absence of ClpP. Degrades anti-sigma-E factor RseA in the presence of ClpP2. The polypeptide is ATP-dependent Clp protease ATP-binding subunit ClpC1 (clpC1) (Mycolicibacterium smegmatis (strain ATCC 700084 / mc(2)155) (Mycobacterium smegmatis)).